The following is a 157-amino-acid chain: 2-C-methyl-D-erythritol 2,4-cyclodiphosphate synthase (157 aa).

The a divalent metal cation site is built by Asp-9 and His-11. Residues 9–11 (DVH) and 35–36 (HS) each bind 4-CDP-2-C-methyl-D-erythritol 2-phosphate. His-43 is a binding site for a divalent metal cation. 4-CDP-2-C-methyl-D-erythritol 2-phosphate-binding positions include 57–59 (DIG), 62–66 (FPDTD), 101–107 (AQKPKMA), 133–136 (TTTE), Phe-140, and Arg-143.

It belongs to the IspF family. Homotrimer. A divalent metal cation serves as cofactor.

The catalysed reaction is 4-CDP-2-C-methyl-D-erythritol 2-phosphate = 2-C-methyl-D-erythritol 2,4-cyclic diphosphate + CMP. It functions in the pathway isoprenoid biosynthesis; isopentenyl diphosphate biosynthesis via DXP pathway; isopentenyl diphosphate from 1-deoxy-D-xylulose 5-phosphate: step 4/6. Involved in the biosynthesis of isopentenyl diphosphate (IPP) and dimethylallyl diphosphate (DMAPP), two major building blocks of isoprenoid compounds. Catalyzes the conversion of 4-diphosphocytidyl-2-C-methyl-D-erythritol 2-phosphate (CDP-ME2P) to 2-C-methyl-D-erythritol 2,4-cyclodiphosphate (ME-CPP) with a corresponding release of cytidine 5-monophosphate (CMP). This is 2-C-methyl-D-erythritol 2,4-cyclodiphosphate synthase from Halalkalibacterium halodurans (strain ATCC BAA-125 / DSM 18197 / FERM 7344 / JCM 9153 / C-125) (Bacillus halodurans).